The sequence spans 465 residues: Ras GTPase-activating protein-binding protein 1 (465 aa).

The region spanning 11 to 133 (VGREFVRQYY…FYVHNDIFRY (123 aa)) is the NTF2 domain. Residues K36, K50, K59, K64, K76, and K123 each participate in a glycyl lysine isopeptide (Lys-Gly) (interchain with G-Cter in ubiquitin) cross-link. The tract at residues 142–224 (ITEPQEESEE…EPVLEETAPE (83 aa)) is acidic disordered region. A Phosphothreonine modification is found at T143. Composition is skewed to acidic residues over residues 145-157 (PQEE…EEPE) and 184-205 (EHLE…EQEP). A disordered region spans residues 145 to 242 (PQEESEEEVE…APADIAQTVQ (98 aa)). S149 is modified (phosphoserine). A phosphoserine mark is found at S230, S231, S249, and S252. Residues 254 to 326 (TSKNLPPSGA…PVREAGEQGD (73 aa)) are disordered. Composition is skewed to basic and acidic residues over residues 296-306 (PQRDQRVREQR) and 317-326 (PVREAGEQGD). Positions 339 to 414 (HQLFIGNLPH…VRLNVEEKKT (76 aa)) constitute an RRM domain. Residues K352 and K356 each participate in a glycyl lysine isopeptide (Lys-Gly) (interchain with G-Cter in ubiquitin) cross-link. Position 372 is a phosphoserine (S372). A Glycyl lysine isopeptide (Lys-Gly) (interchain with G-Cter in ubiquitin) cross-link involves residue K375. Residue K375 is modified to N6-acetyllysine; alternate. K375 is covalently cross-linked (Glycyl lysine isopeptide (Lys-Gly) (interchain with G-Cter in SUMO2); alternate). A Glycyl lysine isopeptide (Lys-Gly) (interchain with G-Cter in ubiquitin); alternate cross-link involves residue K392. The interval 409–465 (VEEKKTRAAREGDRRDNRLRGPGGPRGGLGGGMRGPPRGGMVQKPGFGVGRSIAPRQ) is RG-rich region. The span at 412–427 (KKTRAAREGDRRDNRL) shows a compositional bias: basic and acidic residues. The tract at residues 412-465 (KKTRAAREGDRRDNRLRGPGGPRGGLGGGMRGPPRGGMVQKPGFGVGRSIAPRQ) is disordered. The residue at position 428 (R428) is an Asymmetric dimethylarginine. The span at 429–446 (GPGGPRGGLGGGMRGPPR) shows a compositional bias: gly residues. The residue at position 434 (R434) is an Asymmetric dimethylarginine; alternate. Omega-N-methylarginine; alternate occurs at positions 434, 446, 459, and 464. R459 carries the post-translational modification Dimethylated arginine; alternate.

Homodimer and oligomer. Component of a TAU mRNP complex, at least composed of IGF2BP1, ELAVL4 and G3BP1. Binds to the SH3 domain of Ras GTPase-activating protein (RASA1) in proliferating cells. No interaction in quiescent cells. Interacts (via NTF2 domain) with USP10; inhibiting stress granule formation by lowering G3BP1 valence. Interacts (via NTF2 domain) with CAPRIN1; promoting stress granule formation by lowering the saturation-concentration of G3BP1. Interacts (via NTF2 domain) with UBAP2L; promoting stress granule formation. Associates (via RG-rich region) with 40S ribosome subunits. Interacts with RPTOR and SPAG5; this complex is increased by oxidative stress. Interacts with ATXN2L. Interacts with STYXL1. Interacts with CGAS (via N-terminus); this interaction promotes the DNA-binding and activation of CGAS. Interacts (via C-terminus) with RIGI. Interacts with PABPC1. Interacts with QKI (isoforms QKI6 and QKI7); directing N(7)-methylguanine-containing mRNAs to stress granules. Mg(2+) serves as cofactor. In terms of processing, phosphorylation of the acidic disordered region regulates stress granule assembly. RASA1-dependent phosphorylation of Ser-149 induces a conformational change that prevents self-association. Dephosphorylation after HRAS activation is required for stress granule assembly. Ser-149 phosphorylation induces partial nuclear localization. Post-translationally, arg-435 is dimethylated, probably to asymmetric dimethylarginine. Ubiquitinated by TRIM21 via 'Lys-63'-linked polyubiquitination in the NTF2 domain in response to heat shock, leading to stress granule disassembly: ubiquitination promotes interaction with the FAF2 adapter, followed by interaction with VCP, which extracts G3BP1 from stress granules, leading to stress granule disassembly. In case of prolonged stress, ubiquitination by TRIM21 leads to autophagy-dependent degradation of G3BP1 via recruitment of ubiquitinated G3BP1 by SQSTM1 and/or CALCOCO2 to autophagosomes.

The protein localises to the cytoplasm. Its subcellular location is the cytosol. The protein resides in the perikaryon. It localises to the stress granule. It is found in the nucleus. It catalyses the reaction ATP + H2O = ADP + phosphate + H(+). Under physiological conditions, G3BP1 adopts a compact state that is stabilized by intramolecular interactions between the RG-rich and the acidic regions that inhibit phase separation. Upon stress, polysomes disassemble and mRNAs are released in an unfolded protein-free state. Binding of unfolded mRNA to G3BP1 outcompetes the intramolecular interactions and RNA-bound G3BP1 adopts an expanded conformation in which the RG-rich region becomes exposed to engage in protein-protein and protein-RNA interactions, allowing physical cross-linking of RNA molecules to form protein-RNA condensates, leading to liquid-liquid phase separation (LLPS). In terms of biological role, protein involved in various processes, such as stress granule formation and innate immunity. Plays an essential role in stress granule formation. Stress granules are membraneless compartments that store mRNAs and proteins, such as stalled translation pre-initiation complexes, in response to stress. Promotes formation of stress granules phase-separated membraneless compartment by undergoing liquid-liquid phase separation (LLPS) upon unfolded RNA-binding: functions as a molecular switch that triggers RNA-dependent LLPS in response to a rise in intracellular free RNA concentrations. Also acts as an ATP- and magnesium-dependent helicase: unwinds DNA/DNA, RNA/DNA, and RNA/RNA substrates with comparable efficiency. Acts unidirectionally by moving in the 5' to 3' direction along the bound single-stranded DNA. Unwinds preferentially partial DNA and RNA duplexes having a 17 bp annealed portion and either a hanging 3' tail or hanging tails at both 5'- and 3'-ends. Plays an essential role in innate immunity by promoting CGAS and RIGI activity. Participates in the DNA-triggered cGAS/STING pathway by promoting the DNA binding and activation of CGAS. Triggers the condensation of cGAS, a process probably linked to the formation of membrane-less organelles. Also enhances RIGI-induced type I interferon production probably by helping RIGI at sensing pathogenic RNA. May also act as a phosphorylation-dependent sequence-specific endoribonuclease in vitro: Cleaves exclusively between cytosine and adenine and cleaves MYC mRNA preferentially at the 3'-UTR. This is Ras GTPase-activating protein-binding protein 1 (G3BP1) from Bos taurus (Bovine).